The following is a 47-amino-acid chain: Fasciclin-like arabinogalactan protein (47 aa).

Residues alanine 1–arginine 47 enclose the FAS1 domain.

The protein belongs to the fasciclin-like AGP family.

Its function is as follows. May be a cell surface adhesion protein. This Jatropha curcas (Barbados nut) protein is Fasciclin-like arabinogalactan protein.